The sequence spans 106 residues: Iron-sulfur cluster assembly protein CyaY (106 aa).

The protein belongs to the frataxin family.

Involved in iron-sulfur (Fe-S) cluster assembly. May act as a regulator of Fe-S biogenesis. This is Iron-sulfur cluster assembly protein CyaY from Citrobacter koseri (strain ATCC BAA-895 / CDC 4225-83 / SGSC4696).